The primary structure comprises 402 residues: Nicotinate phosphoribosyltransferase (402 aa).

Histidine 224 bears the Phosphohistidine; by autocatalysis mark.

This sequence belongs to the NAPRTase family. Post-translationally, transiently phosphorylated on a His residue during the reaction cycle. Phosphorylation strongly increases the affinity for substrates and increases the rate of nicotinate D-ribonucleotide production. Dephosphorylation regenerates the low-affinity form of the enzyme, leading to product release.

The catalysed reaction is nicotinate + 5-phospho-alpha-D-ribose 1-diphosphate + ATP + H2O = nicotinate beta-D-ribonucleotide + ADP + phosphate + diphosphate. It participates in cofactor biosynthesis; NAD(+) biosynthesis; nicotinate D-ribonucleotide from nicotinate: step 1/1. Its function is as follows. Catalyzes the synthesis of beta-nicotinate D-ribonucleotide from nicotinate and 5-phospho-D-ribose 1-phosphate at the expense of ATP. The polypeptide is Nicotinate phosphoribosyltransferase (Neisseria meningitidis serogroup A / serotype 4A (strain DSM 15465 / Z2491)).